A 403-amino-acid chain; its full sequence is D-galactonate dehydratase family member Mmwyl1_0037 (403 aa).

2 residues coordinate substrate: Asn37 and His122. Catalysis depends on Tyr159, which acts as the Proton donor/acceptor. Residue Asp211 coordinates Mg(2+). Catalysis depends on His213, which acts as the Proton donor/acceptor. Mg(2+) contacts are provided by Glu237 and Glu263. 5 residues coordinate substrate: Glu263, Arg284, His313, Asp317, and Glu340.

It belongs to the mandelate racemase/muconate lactonizing enzyme family. GalD subfamily. It depends on Mg(2+) as a cofactor.

The enzyme catalyses D-mannonate = 2-dehydro-3-deoxy-D-gluconate + H2O. Has low D-mannonate dehydratase activity (in vitro), suggesting that this is not a physiological substrate and that it has no significant role in D-mannonate degradation in vivo. Has no detectable activity with a panel of 70 other acid sugars (in vitro). This is D-galactonate dehydratase family member Mmwyl1_0037 from Marinomonas sp. (strain MWYL1).